The following is a 343-amino-acid chain: Methionine import ATP-binding protein MetN (343 aa).

An ABC transporter domain is found at 2–241 (IKLSNITKVF…PKTPLAQKFI (240 aa)). 38 to 45 (GASGAGKS) contacts ATP.

Belongs to the ABC transporter superfamily. Methionine importer (TC 3.A.1.24) family. The complex is composed of two ATP-binding proteins (MetN), two transmembrane proteins (MetI) and a solute-binding protein (MetQ).

It localises to the cell inner membrane. The catalysed reaction is L-methionine(out) + ATP + H2O = L-methionine(in) + ADP + phosphate + H(+). It catalyses the reaction D-methionine(out) + ATP + H2O = D-methionine(in) + ADP + phosphate + H(+). Its function is as follows. Part of the ABC transporter complex MetNIQ involved in methionine import. Responsible for energy coupling to the transport system. The sequence is that of Methionine import ATP-binding protein MetN from Shigella boydii serotype 4 (strain Sb227).